Reading from the N-terminus, the 210-residue chain is Protein GrpE (210 aa).

The interval 1 to 71 (MSEKDQSVNN…DTKIKELEKL (71 aa)) is disordered. Over residues 11 to 23 (TEEDFNVETEDNQ) the composition is skewed to acidic residues. The segment covering 24–35 (NDTNIENSVSNT) has biased composition (polar residues). Over residues 36–46 (DNSEANASDSE) the composition is skewed to low complexity. Positions 47–60 (NNSEESIKDEESES) are enriched in acidic residues. The segment covering 61–71 (QDTKIKELEKL) has biased composition (basic and acidic residues).

This sequence belongs to the GrpE family. Homodimer.

It is found in the cytoplasm. Participates actively in the response to hyperosmotic and heat shock by preventing the aggregation of stress-denatured proteins, in association with DnaK and GrpE. It is the nucleotide exchange factor for DnaK and may function as a thermosensor. Unfolded proteins bind initially to DnaJ; upon interaction with the DnaJ-bound protein, DnaK hydrolyzes its bound ATP, resulting in the formation of a stable complex. GrpE releases ADP from DnaK; ATP binding to DnaK triggers the release of the substrate protein, thus completing the reaction cycle. Several rounds of ATP-dependent interactions between DnaJ, DnaK and GrpE are required for fully efficient folding. The sequence is that of Protein GrpE from Staphylococcus epidermidis (strain ATCC 35984 / DSM 28319 / BCRC 17069 / CCUG 31568 / BM 3577 / RP62A).